The following is a 302-amino-acid chain: N-acetylaspartate synthetase (302 aa).

Residues Pro46–Val60 are compositionally biased toward pro residues. Positions Pro46–Pro72 are disordered. The helical transmembrane segment at Tyr121–Val141 threads the bilayer. The N-acetyltransferase domain occupies Ala143–Ala283.

This sequence belongs to the NAT8 family. Expressed in brain.

Its subcellular location is the cytoplasm. The protein localises to the microsome membrane. It is found in the mitochondrion membrane. The protein resides in the endoplasmic reticulum membrane. It carries out the reaction L-aspartate + acetyl-CoA = N-acetyl-L-aspartate + CoA + H(+). Aminooxyacetic acid (AOAA) blocks its activity in both cytoplasm and mitochondria. Catalyzes the synthesis of N-acetylaspartate acid (NAA) from L-aspartate and acetyl-CoA. Promotes dopamine uptake by regulating TNF-alpha expression. Attenuates methamphetamine-induced inhibition of dopamine uptake. The polypeptide is N-acetylaspartate synthetase (Homo sapiens (Human)).